The chain runs to 449 residues: tRNA modification GTPase MnmE (449 aa).

The (6S)-5-formyl-5,6,7,8-tetrahydrofolate site is built by arginine 24, glutamate 81, and lysine 121. The TrmE-type G domain maps to 218–375 (GLVVAITGPP…LIAALGKFAA (158 aa)). GTP-binding positions include 228–233 (NVGKST), 247–253 (SPHAGTT), and 272–275 (DTAG). The Mg(2+) site is built by serine 232 and threonine 253. Residue lysine 449 coordinates (6S)-5-formyl-5,6,7,8-tetrahydrofolate.

The protein belongs to the TRAFAC class TrmE-Era-EngA-EngB-Septin-like GTPase superfamily. TrmE GTPase family. As to quaternary structure, homodimer. Heterotetramer of two MnmE and two MnmG subunits. K(+) serves as cofactor.

The protein localises to the cytoplasm. In terms of biological role, exhibits a very high intrinsic GTPase hydrolysis rate. Involved in the addition of a carboxymethylaminomethyl (cmnm) group at the wobble position (U34) of certain tRNAs, forming tRNA-cmnm(5)s(2)U34. This Rhodopseudomonas palustris (strain BisB18) protein is tRNA modification GTPase MnmE.